A 360-amino-acid chain; its full sequence is Photosystem II protein D1 (360 aa).

The next 3 helical transmembrane spans lie at 29–46, 118–133, and 142–156; these read YIGW…TATS, HFLL…EWEL, and WIFV…AASA. Residue His-118 participates in chlorophyll a binding. Pheophytin a is bound at residue Tyr-126. [CaMn4O5] cluster-binding residues include Asp-170 and Glu-189. The chain crosses the membrane as a helical span at residues 197-218; sequence FHMAGVAGVFGGSLFSAMHGSL. Residue His-198 participates in chlorophyll a binding. A quinone is bound by residues His-215 and 264–265; that span reads SF. A Fe cation-binding site is contributed by His-215. Fe cation is bound at residue His-272. The chain crosses the membrane as a helical span at residues 274–288; the sequence is FLALWPVLGIWLTAM. Residues His-332, Glu-333, Asp-342, and Ala-344 each contribute to the [CaMn4O5] cluster site. A propeptide spanning residues 345–360 is cleaved from the precursor; it reads SGDVLPVAFTAPAVNA.

Belongs to the reaction center PufL/M/PsbA/D family. As to quaternary structure, PSII is composed of 1 copy each of membrane proteins PsbA, PsbB, PsbC, PsbD, PsbE, PsbF, PsbH, PsbI, PsbJ, PsbK, PsbL, PsbM, PsbT, PsbX, PsbY, PsbZ, Psb30/Ycf12, at least 3 peripheral proteins of the oxygen-evolving complex and a large number of cofactors. It forms dimeric complexes. The D1/D2 heterodimer binds P680, chlorophylls that are the primary electron donor of PSII, and subsequent electron acceptors. It shares a non-heme iron and each subunit binds pheophytin, quinone, additional chlorophylls, carotenoids and lipids. D1 provides most of the ligands for the Mn4-Ca-O5 cluster of the oxygen-evolving complex (OEC). There is also a Cl(-1) ion associated with D1 and D2, which is required for oxygen evolution. The PSII complex binds additional chlorophylls, carotenoids and specific lipids. serves as cofactor. Tyr-161 forms a radical intermediate that is referred to as redox-active TyrZ, YZ or Y-Z. Post-translationally, C-terminally processed by CTPA; processing is essential to allow assembly of the oxygen-evolving complex and thus photosynthetic growth.

It localises to the plastid. Its subcellular location is the chloroplast thylakoid membrane. It carries out the reaction 2 a plastoquinone + 4 hnu + 2 H2O = 2 a plastoquinol + O2. Functionally, photosystem II (PSII) is a light-driven water:plastoquinone oxidoreductase that uses light energy to abstract electrons from H(2)O, generating O(2) and a proton gradient subsequently used for ATP formation. It consists of a core antenna complex that captures photons, and an electron transfer chain that converts photonic excitation into a charge separation. The D1/D2 (PsbA/PsbD) reaction center heterodimer binds P680, the primary electron donor of PSII as well as several subsequent electron acceptors. The polypeptide is Photosystem II protein D1 (Thalassiosira pseudonana (Marine diatom)).